The following is a 281-amino-acid chain: MTQKIIRVGNIEIANDKPFVLFGGMNVLESRDLAMKVCEEYVRVTEKLGIPYVFKASFDKANRSSVTSYRGPGMEEGLKIFEEIKRTFNVPVITDVHEPYQAEPVAKVCDIIQLPAFLSRQTDLVVAMAKTGAVINIKKAQFLAPQEMKHILAKCEEAGNDQLILCERGSSFGYNNLVVDMLGFGIMKQFEYPVFFDVTHALQMPGGRSDSAGGRRAQVTDLAKAGMSQGLAGLFLEAHPDPDNAKCDGPCALRLDKLEPFLAQLKQLDDLVKSFPTVETA.

The protein belongs to the KdsA family.

The protein resides in the cytoplasm. The enzyme catalyses D-arabinose 5-phosphate + phosphoenolpyruvate + H2O = 3-deoxy-alpha-D-manno-2-octulosonate-8-phosphate + phosphate. It functions in the pathway carbohydrate biosynthesis; 3-deoxy-D-manno-octulosonate biosynthesis; 3-deoxy-D-manno-octulosonate from D-ribulose 5-phosphate: step 2/3. Its pathway is bacterial outer membrane biogenesis; lipopolysaccharide biosynthesis. The sequence is that of 2-dehydro-3-deoxyphosphooctonate aldolase from Pseudomonas putida (strain GB-1).